Here is a 399-residue protein sequence, read N- to C-terminus: 3-dehydroquinate synthase (399 aa).

The protein belongs to the archaeal-type DHQ synthase family.

It catalyses the reaction 2-amino-2,3,7-trideoxy-D-lyxo-hept-6-ulosonate + NAD(+) + H2O = 3-dehydroquinate + NH4(+) + NADH + H(+). Catalyzes the oxidative deamination and cyclization of 2-amino-3,7-dideoxy-D-threo-hept-6-ulosonic acid (ADH) to yield 3-dehydroquinate (DHQ), which is fed into the canonical shikimic pathway of aromatic amino acid biosynthesis. This chain is 3-dehydroquinate synthase, found in Haloquadratum walsbyi (strain DSM 16790 / HBSQ001).